Here is a 185-residue protein sequence, read N- to C-terminus: Protein GrpE (185 aa).

Residues 1 to 37 (MSEEKQTPEQEAEVEAQEEAVQADTEEVTQDEQSAFQ) form a disordered region.

It belongs to the GrpE family. As to quaternary structure, homodimer.

Its subcellular location is the cytoplasm. Its function is as follows. Participates actively in the response to hyperosmotic and heat shock by preventing the aggregation of stress-denatured proteins, in association with DnaK and GrpE. It is the nucleotide exchange factor for DnaK and may function as a thermosensor. Unfolded proteins bind initially to DnaJ; upon interaction with the DnaJ-bound protein, DnaK hydrolyzes its bound ATP, resulting in the formation of a stable complex. GrpE releases ADP from DnaK; ATP binding to DnaK triggers the release of the substrate protein, thus completing the reaction cycle. Several rounds of ATP-dependent interactions between DnaJ, DnaK and GrpE are required for fully efficient folding. This is Protein GrpE from Bacillus pumilus (strain SAFR-032).